The primary structure comprises 482 residues: UDP-N-acetylmuramate--L-alanine ligase (482 aa).

The segment at 1–26 (MPQLPMTDSAPLPTPAPSSPAQPSAQ) is disordered. 140 to 146 (GTHGKTT) serves as a coordination point for ATP.

This sequence belongs to the MurCDEF family.

The protein resides in the cytoplasm. The enzyme catalyses UDP-N-acetyl-alpha-D-muramate + L-alanine + ATP = UDP-N-acetyl-alpha-D-muramoyl-L-alanine + ADP + phosphate + H(+). It participates in cell wall biogenesis; peptidoglycan biosynthesis. Functionally, cell wall formation. This chain is UDP-N-acetylmuramate--L-alanine ligase, found in Deinococcus radiodurans (strain ATCC 13939 / DSM 20539 / JCM 16871 / CCUG 27074 / LMG 4051 / NBRC 15346 / NCIMB 9279 / VKM B-1422 / R1).